An 81-amino-acid chain; its full sequence is Putative membrane protein insertion efficiency factor (81 aa).

The protein belongs to the UPF0161 family.

It localises to the cell membrane. In terms of biological role, could be involved in insertion of integral membrane proteins into the membrane. The sequence is that of Putative membrane protein insertion efficiency factor from Geobacillus kaustophilus (strain HTA426).